The sequence spans 189 residues: Ribosome maturation factor RimM (189 aa).

Polar residues predominate over residues 1 to 16 (MAPSCPTRSRVWSSRT). The disordered stretch occupies residues 1–21 (MAPSCPTRSRVWSSRTSPPPD). Positions 118 to 189 (ENEFYWSDLI…TVEVDWGEDY (72 aa)) constitute a PRC barrel domain.

Belongs to the RimM family. As to quaternary structure, binds ribosomal protein uS19.

The protein resides in the cytoplasm. In terms of biological role, an accessory protein needed during the final step in the assembly of 30S ribosomal subunit, possibly for assembly of the head region. Essential for efficient processing of 16S rRNA. May be needed both before and after RbfA during the maturation of 16S rRNA. It has affinity for free ribosomal 30S subunits but not for 70S ribosomes. The protein is Ribosome maturation factor RimM of Thiobacillus denitrificans (strain ATCC 25259 / T1).